We begin with the raw amino-acid sequence, 735 residues long: Translation initiation factor IF-2 (735 aa).

Composition is skewed to basic and acidic residues over residues 52 to 66 and 101 to 117; these read VNSE…EKPK and KGKE…EKKL. The disordered stretch occupies residues 52–154; that stretch reads VNSEKKAEKK…PAKKEKELPK (103 aa). Positions 121 to 133 are enriched in basic residues; it reads AKKKGKGPMKGKK. The span at 134–145 shows a compositional bias: low complexity; sequence QAAPASKQAQQP. Positions 236-405 constitute a tr-type G domain; sequence ERPPVVTIMG…LLVSEMEELK (170 aa). The G1 stretch occupies residues 245–252; sequence GHVDHGKT. 245 to 252 contacts GTP; sequence GHVDHGKT. The interval 270 to 274 is G2; the sequence is GITQH. Residues 291–294 are G3; the sequence is DTPG. GTP is bound by residues 291 to 295 and 345 to 348; these read DTPGH and NKMD. Positions 345-348 are G4; it reads NKMD. Positions 381-383 are G5; it reads SAK.

This sequence belongs to the TRAFAC class translation factor GTPase superfamily. Classic translation factor GTPase family. IF-2 subfamily.

It localises to the cytoplasm. One of the essential components for the initiation of protein synthesis. Protects formylmethionyl-tRNA from spontaneous hydrolysis and promotes its binding to the 30S ribosomal subunits. Also involved in the hydrolysis of GTP during the formation of the 70S ribosomal complex. The sequence is that of Translation initiation factor IF-2 from Geobacillus thermodenitrificans (strain NG80-2).